A 161-amino-acid chain; its full sequence is ATP synthase subunit b' (161 aa).

The helical transmembrane segment at 30 to 47 threads the bilayer; sequence VMAIQFLVLAALLNKLFY.

This sequence belongs to the ATPase B chain family. F-type ATPases have 2 components, F(1) - the catalytic core - and F(0) - the membrane proton channel. F(1) has five subunits: alpha(3), beta(3), gamma(1), delta(1), epsilon(1). F(0) has four main subunits: a(1), b(1), b'(1) and c(10-14). The alpha and beta chains form an alternating ring which encloses part of the gamma chain. F(1) is attached to F(0) by a central stalk formed by the gamma and epsilon chains, while a peripheral stalk is formed by the delta, b and b' chains.

Its subcellular location is the cellular thylakoid membrane. Its function is as follows. F(1)F(0) ATP synthase produces ATP from ADP in the presence of a proton or sodium gradient. F-type ATPases consist of two structural domains, F(1) containing the extramembraneous catalytic core and F(0) containing the membrane proton channel, linked together by a central stalk and a peripheral stalk. During catalysis, ATP synthesis in the catalytic domain of F(1) is coupled via a rotary mechanism of the central stalk subunits to proton translocation. In terms of biological role, component of the F(0) channel, it forms part of the peripheral stalk, linking F(1) to F(0). The b'-subunit is a diverged and duplicated form of b found in plants and photosynthetic bacteria. In Picosynechococcus sp. (strain ATCC 27264 / PCC 7002 / PR-6) (Agmenellum quadruplicatum), this protein is ATP synthase subunit b'.